Consider the following 206-residue polypeptide: Ribosomal RNA small subunit methyltransferase G (206 aa).

Residues Gly-73, Leu-78, 124–125 (VE), and Arg-139 each bind S-adenosyl-L-methionine.

It belongs to the methyltransferase superfamily. RNA methyltransferase RsmG family.

The protein resides in the cytoplasm. It carries out the reaction guanosine(527) in 16S rRNA + S-adenosyl-L-methionine = N(7)-methylguanosine(527) in 16S rRNA + S-adenosyl-L-homocysteine. Specifically methylates the N7 position of guanine in position 527 of 16S rRNA. This Photobacterium profundum (strain SS9) protein is Ribosomal RNA small subunit methyltransferase G.